Consider the following 368-residue polypeptide: Putative flavoprotein monooxygenase (368 aa).

Residues Ala-14, Glu-34, Ser-41, 52 to 53, Val-110, Ala-307, and Ile-319 contribute to the FAD site; that span reads IT.

FAD is required as a cofactor.

Functionally, FAD-binding protein that may have monooxygenase activity using NADPH and/or NADH as an electron donor. The polypeptide is Putative flavoprotein monooxygenase (Staphylococcus aureus (strain Mu50 / ATCC 700699)).